We begin with the raw amino-acid sequence, 190 residues long: Dynactin subunit 6 (190 aa).

A Phosphothreonine modification is found at Thr-186.

The protein belongs to the dynactin subunits 5/6 family. Dynactin subunit 6 subfamily. As to quaternary structure, subunit of dynactin, a multiprotein complex part of a tripartite complex with dynein and a adapter, such as BICDL1, BICD2 or HOOK3. The dynactin complex is built around ACTR1A/ACTB filament and consists of an actin-related filament composed of a shoulder domain, a pointed end and a barbed end. Its length is defined by its flexible shoulder domain. The soulder is composed of 2 DCTN1 subunits, 4 DCTN2 and 2 DCTN3. The 4 DCNT2 (via N-terminus) bind the ACTR1A filament and act as molecular rulers to determine the length. The pointed end is important for binding dynein-dynactin cargo adapters. Consists of 4 subunits: ACTR10, DCNT4, DCTN5 and DCTN6. Within the complex DCTN6 forms a heterodimer with DCTN5. The barbed end is composed of a CAPZA1:CAPZB heterodimers, which binds ACTR1A/ACTB filament and dynactin and stabilizes dynactin. Interacts with PLK1. Interacts with N4BP2L1. In terms of processing, phosphorylation at Thr-186 by CDK1 during mitotic prometaphase creates a binding site for PLK1 that facilitates its recruitment to kinetochores.

It localises to the cytoplasm. The protein localises to the cytoskeleton. It is found in the chromosome. The protein resides in the centromere. Its subcellular location is the kinetochore. In terms of biological role, part of the dynactin complex that activates the molecular motor dynein for ultra-processive transport along microtubules. The polypeptide is Dynactin subunit 6 (DCTN6) (Sus scrofa (Pig)).